The sequence spans 574 residues: Craniofacial development protein 2 (574 aa).

Basic and acidic residues-rich tracts occupy residues 1 to 16 (MEEVDSKDISSSKAED), 23 to 37 (ECHEEAVDELMKEDE), 45 to 55 (EQTKGIKRKAE), 86 to 111 (SEKEDAATEQEKGVESEDARKKKEDE), and 134 to 172 (TGEETEETRSGEEQEKPKEMQEVKLTKSLVEEVRCDRQQ). Disordered regions lie at residues 1–222 (MEEV…PAVD) and 488–574 (TRPF…SGVF). A compositionally biased stretch (polar residues) spans 199–208 (KTGTNASSKN). Residues 493–572 (GTNEADDTSE…AVPSLPAGSG (80 aa)) form a hydrophilic region. Over residues 502-516 (EESKPSSEQKGKEKP) the composition is skewed to basic and acidic residues. Residues 518-528 (ASVPSAVSSVP) show a composition bias toward low complexity.

It is found in the cytoplasm. It localises to the nucleus. The sequence is that of Craniofacial development protein 2 (CFDP2) from Tragulus javanicus (Lesser Malay chevrotain).